The primary structure comprises 1836 residues: InaD-like protein (1836 aa).

The L27 domain maps to 1–65 (MPENPAAEKM…SIKQLKGQLS (65 aa)). PDZ domains lie at 134 to 221 (YIDI…AREV), 248 to 328 (DVEL…ARDP), and 365 to 453 (NVEL…VRRK). Phosphoserine occurs at positions 455, 459, and 482. Residues 456–466 (LSASPFEQPSS) show a composition bias toward polar residues. The disordered stretch occupies residues 456–492 (LSASPFEQPSSREAVAEPPEVPELTGSLKPETNSRME). The PDZ 4 domain occupies 555 to 641 (DEELQKYSKL…PFTLVCCRRL (87 aa)). Serine 647 carries the phosphoserine modification. 2 consecutive PDZ domains span residues 687-773 (TVEL…ICKP) and 1074-1166 (PRIV…VVQS). The span at 1173-1191 (VIPSVNNKGKTPPQNQDQN) shows a compositional bias: polar residues. Residues 1173–1232 (VIPSVNNKGKTPPQNQDQNTQEKKAKRHGTAPPPMKLPPPYRAPSADTEESEEDSALTDK) are disordered. Pro residues predominate over residues 1203–1214 (APPPMKLPPPYR). The residue at position 1217 (serine 1217) is a Phosphoserine. Residues 1219–1228 (DTEESEEDSA) are compositionally biased toward acidic residues. The PDZ 7 domain maps to 1245 to 1328 (LHIIELEKDK…PTRVKLVFIR (84 aa)). Residues 1341-1448 (FPVPSHSPSP…ADVTGSGNFQ (108 aa)) form a disordered region. A compositionally biased stretch (basic and acidic residues) spans 1372 to 1383 (PLPERESSKPED). Polar residues-rich tracts occupy residues 1415–1426 (YSAQVSSSSQEI) and 1434–1448 (CQST…GNFQ). 2 PDZ domains span residues 1472-1555 (EMII…VIYR) and 1568-1650 (VFLV…EIGR). At threonine 1545 the chain carries Phosphothreonine. The segment at 1657–1678 (ASSRKTSQNSQGDQHSAHSSCR) is disordered. Residues 1709 to 1795 (PRTVEIIREL…FGRIILQVVA (87 aa)) enclose the PDZ 10 domain. The tract at residues 1813–1836 (SQLGSPTADRHPQDPEELLQRTAD) is disordered.

In terms of assembly, forms a ternary complex with PALS1 and CRB1. Component of a complex whose core is composed of ARHGAP17, AMOT, PALS1, INADL/PATJ and PARD3/PAR3. Forms a heterotrimeric complex composed of MMP5, LIN7B and PATJ; the N-terminal L27 domain of PALS1 interacts with the L27 domain of PATJ and the C-terminal L27 domain of PALS1 interacts with the L27 domain of LIN7B. Component of a complex composed of CRB3, PALS1 and PATJ. As part of the Crumbs complex; interacts with WWP1, the interaction is enhanced by AMOTL2 and facilitates WWP1 localization to the plasma membrane. The Crumbs complex promotes monoubiquitination of AMOTL2 by WWP1, which activates the Hippo signaling pathway. Interacts (via N-terminus) with PALS1/PALS (via PDZ domain). Interacts with TJP3/ZO-3 and CLDN1/claudin-1. Interacts with ASIC3, KCNJ10, KCNJ15, GRIN2A, GRIN2B, GRIN2C, GRIN2D, NLGN2, and HTR2A. Interacts with MPP7. Directly interacts with HTR4. Interacts (via PDZ domain 8) with WWC1 (via the ADDV motif). Interacts with SLC6A4. Interacts (via C-terminus) with ARHGEF18. Interacts with NPHP1. Interacts with PARD3/PAR3. Interacts (via PDZ1-6 domains) with TJP1/ZO1; the interaction is required for attachment and extension of TJP1/ZO1 condensates along the apical cell interface. Abundantly expressed in germ cells, also expressed in testes and seminiferous tubules, with faint expression in Sertoli cells (at protein level).

It localises to the cell junction. Its subcellular location is the tight junction. The protein resides in the apical cell membrane. The protein localises to the cytoplasm. It is found in the perinuclear region. In terms of biological role, scaffolding protein that facilitates the localization of proteins to the cell membrane. Required for the correct formation of tight junctions and epithelial apico-basal polarity. Acts (via its L27 domain) as an apical connector and elongation factor for multistranded TJP1/ZO1 condensates that form a tight junction belt, thereby required for the formation of the tight junction-mediated cell barrier. Positively regulates epithelial cell microtubule elongation and cell migration, possibly via facilitating localization of PRKCI/aPKC and PAR3D/PAR3 at the leading edge of migrating cells. Plays a role in the correct reorientation of the microtubule-organizing center during epithelial migration. May regulate the surface expression and/or function of ASIC3 in sensory neurons. May recruit ARHGEF18 to apical cell-cell boundaries. The sequence is that of InaD-like protein from Rattus norvegicus (Rat).